A 350-amino-acid chain; its full sequence is Biotin synthase (350 aa).

The region spanning 38 to 256 (NHVQVSTLLS…IAVARIMMPE (219 aa)) is the Radical SAM core domain. Positions 53, 57, and 60 each coordinate [4Fe-4S] cluster. Cysteine 97, cysteine 128, cysteine 188, and arginine 260 together coordinate [2Fe-2S] cluster.

Belongs to the radical SAM superfamily. Biotin synthase family. In terms of assembly, homodimer. [4Fe-4S] cluster serves as cofactor. Requires [2Fe-2S] cluster as cofactor.

It catalyses the reaction (4R,5S)-dethiobiotin + (sulfur carrier)-SH + 2 reduced [2Fe-2S]-[ferredoxin] + 2 S-adenosyl-L-methionine = (sulfur carrier)-H + biotin + 2 5'-deoxyadenosine + 2 L-methionine + 2 oxidized [2Fe-2S]-[ferredoxin]. Its pathway is cofactor biosynthesis; biotin biosynthesis; biotin from 7,8-diaminononanoate: step 2/2. In terms of biological role, catalyzes the conversion of dethiobiotin (DTB) to biotin by the insertion of a sulfur atom into dethiobiotin via a radical-based mechanism. The protein is Biotin synthase of Aliivibrio fischeri (strain MJ11) (Vibrio fischeri).